Here is a 179-residue protein sequence, read N- to C-terminus: ATP-dependent protease subunit HslV (179 aa).

T7 is a catalytic residue. Positions 162, 165, and 168 each coordinate Na(+).

This sequence belongs to the peptidase T1B family. HslV subfamily. In terms of assembly, a double ring-shaped homohexamer of HslV is capped on each side by a ring-shaped HslU homohexamer. The assembly of the HslU/HslV complex is dependent on binding of ATP.

The protein localises to the cytoplasm. The enzyme catalyses ATP-dependent cleavage of peptide bonds with broad specificity.. Allosterically activated by HslU binding. Protease subunit of a proteasome-like degradation complex believed to be a general protein degrading machinery. This Teredinibacter turnerae (strain ATCC 39867 / T7901) protein is ATP-dependent protease subunit HslV.